The primary structure comprises 62 residues: Protein CYSTEINE-RICH TRANSMEMBRANE MODULE 2 (62 aa).

The next 2 helical transmembrane spans lie at 23-39 (VAVAATRSASVVAAAFD) and 33-53 (VVAAAFDFYICIIISTLLSLI).

The protein belongs to the CYSTM1 family. As to quaternary structure, heterodimers. Binds weakly to CYSTM7 and WIH1/CYSTM13. In terms of tissue distribution, mostly expressed in stems, siliques, leaves and flowers and, to a lower extent, in roots.

The protein localises to the cell membrane. Its subcellular location is the nucleus. It is found in the secreted. It localises to the cell wall. Its function is as follows. Involved in resistance to abiotic stress. Confers resistance to heavy metal ions (e.g. cadmium (CdCl(2)) and copper (CuCl(2))) by chelating them at the plasma membrane of root cells, thus stopping their entry and reducing their accumulation. The polypeptide is Protein CYSTEINE-RICH TRANSMEMBRANE MODULE 2 (Arabidopsis thaliana (Mouse-ear cress)).